The chain runs to 335 residues: MKITRSLSTVEVHTGGEAFRIVTSGLPRAPGDTIVQRRAWLKENADEIRRALMFEPRGHADMYGGYLTEPVSPNADFGVIFVHNEGYSDHCGHGVIALSTAAVELGWVQRTVPETRVGIDAPCGFIEAFVKWDGEHAGPVRFVNVPSFIWQRDVSVETPSFGTVTGDIAYGGAFYFYVDGAPFDLPVREAAVEKLIRFGAEVKAAANAKYPVVHPEIPEINHIYGTIIANAPRHPGSTQANCCVFADREVDRSPTGSGTGGRVAQLYQRGLLAAGDTLVNESIVGTVFKGRVLRETTVGDIPAVIPEVEGSAHICGFANWIVDERDPLTYGFLVR.

The active-site Proton acceptor is the cysteine 91. Residues 92 to 93 (GH) and 256 to 257 (GS) each bind substrate.

This sequence belongs to the proline racemase family. Homodimer.

The catalysed reaction is trans-3-hydroxy-L-proline = 1-pyrroline-2-carboxylate + H2O. It participates in amino-acid degradation. In terms of biological role, catalyzes the dehydration of trans-3-hydroxy-L-proline (t3LHyp) to Delta(1)-pyrroline-2-carboxylate (Pyr2C). Together with LhpI, is involved in a t3LHyp degradation pathway to L-proline, which allows A.brasilense to grow on t3LHyp as a sole carbon source. In Azospirillum brasilense, this protein is Trans-3-hydroxy-L-proline dehydratase.